The sequence spans 354 residues: Replication factor C subunit 5 (354 aa).

Residue 40–47 (YGPSGSGK) coordinates ATP.

The protein belongs to the activator 1 small subunits family. Heterotetramer of subunits RFC2, RFC3, RFC4 and RFC5 that can form a complex with RFC1. As to expression, expressed in roots, leaves, shoot apical meristem (SAM), flag leaves and panicles.

It is found in the nucleus. In terms of biological role, may be involved in DNA replication and thus regulate cell proliferation. This is Replication factor C subunit 5 (RFC5) from Oryza sativa subsp. japonica (Rice).